The chain runs to 258 residues: Thiazole synthase (258 aa).

The active-site Schiff-base intermediate with DXP is Lys97. 1-deoxy-D-xylulose 5-phosphate-binding positions include Gly158, Ala184–Gly185, and Asn206–Thr207.

Belongs to the ThiG family. As to quaternary structure, homotetramer. Forms heterodimers with either ThiH or ThiS.

The protein resides in the cytoplasm. The enzyme catalyses [ThiS sulfur-carrier protein]-C-terminal-Gly-aminoethanethioate + 2-iminoacetate + 1-deoxy-D-xylulose 5-phosphate = [ThiS sulfur-carrier protein]-C-terminal Gly-Gly + 2-[(2R,5Z)-2-carboxy-4-methylthiazol-5(2H)-ylidene]ethyl phosphate + 2 H2O + H(+). Its pathway is cofactor biosynthesis; thiamine diphosphate biosynthesis. In terms of biological role, catalyzes the rearrangement of 1-deoxy-D-xylulose 5-phosphate (DXP) to produce the thiazole phosphate moiety of thiamine. Sulfur is provided by the thiocarboxylate moiety of the carrier protein ThiS. In vitro, sulfur can be provided by H(2)S. This Marinomonas sp. (strain MWYL1) protein is Thiazole synthase.